A 371-amino-acid polypeptide reads, in one-letter code: Queuine tRNA-ribosyltransferase (371 aa).

D89 (proton acceptor) is an active-site residue. Substrate contacts are provided by residues 89–93 (DSGGF), D143, Q185, and G212. Positions 243–249 (GVGKPED) are RNA binding. D262 (nucleophile) is an active-site residue. Residues 267–271 (TRNAR) form an RNA binding; important for wobble base 34 recognition region. 4 residues coordinate Zn(2+): C300, C302, C305, and H331.

It belongs to the queuine tRNA-ribosyltransferase family. As to quaternary structure, homodimer. Within each dimer, one monomer is responsible for RNA recognition and catalysis, while the other monomer binds to the replacement base PreQ1. It depends on Zn(2+) as a cofactor.

It carries out the reaction 7-aminomethyl-7-carbaguanine + guanosine(34) in tRNA = 7-aminomethyl-7-carbaguanosine(34) in tRNA + guanine. The protein operates within tRNA modification; tRNA-queuosine biosynthesis. In terms of biological role, catalyzes the base-exchange of a guanine (G) residue with the queuine precursor 7-aminomethyl-7-deazaguanine (PreQ1) at position 34 (anticodon wobble position) in tRNAs with GU(N) anticodons (tRNA-Asp, -Asn, -His and -Tyr). Catalysis occurs through a double-displacement mechanism. The nucleophile active site attacks the C1' of nucleotide 34 to detach the guanine base from the RNA, forming a covalent enzyme-RNA intermediate. The proton acceptor active site deprotonates the incoming PreQ1, allowing a nucleophilic attack on the C1' of the ribose to form the product. After dissociation, two additional enzymatic reactions on the tRNA convert PreQ1 to queuine (Q), resulting in the hypermodified nucleoside queuosine (7-(((4,5-cis-dihydroxy-2-cyclopenten-1-yl)amino)methyl)-7-deazaguanosine). The chain is Queuine tRNA-ribosyltransferase from Pseudomonas putida (strain ATCC 47054 / DSM 6125 / CFBP 8728 / NCIMB 11950 / KT2440).